A 351-amino-acid chain; its full sequence is Beta-hexosaminidase (351 aa).

Substrate contacts are provided by residues D62, R70, R134, and 164-165; that span reads KH. The active-site Proton donor/acceptor is the H177. D249 acts as the Nucleophile in catalysis.

Belongs to the glycosyl hydrolase 3 family. NagZ subfamily.

Its subcellular location is the cytoplasm. It catalyses the reaction Hydrolysis of terminal non-reducing N-acetyl-D-hexosamine residues in N-acetyl-beta-D-hexosaminides.. The protein operates within cell wall biogenesis; peptidoglycan recycling. Functionally, plays a role in peptidoglycan recycling by cleaving the terminal beta-1,4-linked N-acetylglucosamine (GlcNAc) from peptide-linked peptidoglycan fragments, giving rise to free GlcNAc, anhydro-N-acetylmuramic acid and anhydro-N-acetylmuramic acid-linked peptides. This chain is Beta-hexosaminidase, found in Histophilus somni (strain 129Pt) (Haemophilus somnus).